The primary structure comprises 204 residues: Regulatory protein RecX (204 aa).

A compositionally biased stretch (polar residues) spans 1-22; the sequence is MTKSSRPQSISDSVSVAGSQGT. Residues 1 to 44 are disordered; the sequence is MTKSSRPQSISDSVSVAGSQGTLDDLRARVASVPEAPTREPVDS.

This sequence belongs to the RecX family.

It is found in the cytoplasm. Functionally, modulates RecA activity. The chain is Regulatory protein RecX from Mycobacteroides abscessus (strain ATCC 19977 / DSM 44196 / CCUG 20993 / CIP 104536 / JCM 13569 / NCTC 13031 / TMC 1543 / L948) (Mycobacterium abscessus).